Consider the following 384-residue polypeptide: MAQEDYYKVLGVDRDASDQEISKAYRKLAKKYHPDLNHEPGAEEKYKQVNEAYEVLHDKQKRAQYDQFGSAGVNGQGGFGGAGQGFGGAGFDTSGFGDFGDIFGDIFGQGARQQRVDPTQPQRGQDLDYTLTIDFMDAINGKKTQVSYTRDETCETCGGNGCEKGTHPITCDKCHGTGVMTVTQQSMLGMIRRQTTCDKCNGRGVIIEHPCKTCGGKGTVERKNTIEVDIPAGIDNGQQLRYQGQGEAGRNGGPYGDLYISYRIKPSKDFERRGQNIYTEVPISFAQATLGDEITVKTVHGDAKLTIPAGTQPNKKFTLRGQGVPYLRGNGNGDQITTVNIVIPKHINDKQKEDLTNFVHDGGGNITPQEKGFFERLKDKLSGE.

Residues 5 to 69 enclose the J domain; the sequence is DYYKVLGVDR…QKRAQYDQFG (65 aa). The CR-type zinc finger occupies 141–223; it reads GKKTQVSYTR…CGGKGTVERK (83 aa). Cys154, Cys157, Cys171, Cys174, Cys197, Cys200, Cys211, and Cys214 together coordinate Zn(2+). CXXCXGXG motif repeat units lie at residues 154–161, 171–178, 197–204, and 211–218; these read CETCGGNG, CDKCHGTG, CDKCNGRG, and CKTCGGKG.

The protein belongs to the DnaJ family. In terms of assembly, homodimer. The cofactor is Zn(2+).

Its subcellular location is the cytoplasm. Functionally, participates actively in the response to hyperosmotic and heat shock by preventing the aggregation of stress-denatured proteins and by disaggregating proteins, also in an autonomous, DnaK-independent fashion. Unfolded proteins bind initially to DnaJ; upon interaction with the DnaJ-bound protein, DnaK hydrolyzes its bound ATP, resulting in the formation of a stable complex. GrpE releases ADP from DnaK; ATP binding to DnaK triggers the release of the substrate protein, thus completing the reaction cycle. Several rounds of ATP-dependent interactions between DnaJ, DnaK and GrpE are required for fully efficient folding. Also involved, together with DnaK and GrpE, in the DNA replication of plasmids through activation of initiation proteins. The chain is Chaperone protein DnaJ from Lactobacillus acidophilus (strain ATCC 700396 / NCK56 / N2 / NCFM).